Reading from the N-terminus, the 770-residue chain is Low-density lipoprotein receptor-related protein 3 (770 aa).

The first 36 residues, 1-36 (MEKRAAAGPEGAPGARAPLAVVCLVNLFLTGRLSSA), serve as a signal peptide directing secretion. Residues 37 to 496 (VPALAACSGK…HGCLAAVPRK (460 aa)) lie on the Extracellular side of the membrane. Cystine bridges form between cysteine 43–cysteine 72, cysteine 99–cysteine 120, cysteine 166–cysteine 178, cysteine 173–cysteine 191, cysteine 185–cysteine 200, cysteine 212–cysteine 227, cysteine 219–cysteine 240, cysteine 234–cysteine 249, and cysteine 254–cysteine 282. Residues 43-159 (CSGKLEQHTE…QGFRLSYIRG (117 aa)) enclose the CUB 1 domain. The N-linked (GlcNAc...) asparagine glycan is linked to asparagine 71. LDL-receptor class A domains are found at residues 165 to 201 (SCQT…GNCS) and 211 to 250 (LCPG…AGCP). A glycan (N-linked (GlcNAc...) asparagine) is linked at asparagine 199. One can recognise a CUB 2 domain in the interval 254-365 (CGRRLGSFYG…HGFNATYQVK (112 aa)). An N-linked (GlcNAc...) asparagine glycan is attached at asparagine 359. 2 LDL-receptor class A domains span residues 415–453 (ACPP…KNCF) and 454–490 (SCQP…HGCL). 6 disulfide bridges follow: cysteine 416/cysteine 430, cysteine 423/cysteine 443, cysteine 437/cysteine 452, cysteine 455/cysteine 467, cysteine 462/cysteine 480, and cysteine 474/cysteine 489. The chain crosses the membrane as a helical span at residues 497–517 (VITAALIGSLVCGLLLVIALG). Residues 518 to 770 (CAFKLYSLRT…ASDDEALLVC (253 aa)) are Cytoplasmic-facing. The interval 639 to 753 (LLQAAPGPVP…PLGVCRSPPP (115 aa)) is disordered. A compositionally biased stretch (basic and acidic residues) spans 689–703 (RDPEYRPEDKERKAC).

It belongs to the LDLR family. In terms of assembly, binds GGA1 and GGA2.

It is found in the membrane. The protein localises to the coated pit. In terms of biological role, probable receptor, which may be involved in the internalization of lipophilic molecules and/or signal transduction. Its precise role is however unclear, since it does not bind to very low density lipoprotein (VLDL) or to LRPAP1 in vitro. This chain is Low-density lipoprotein receptor-related protein 3 (Lrp3), found in Rattus norvegicus (Rat).